Consider the following 879-residue polypeptide: Prostaglandin F2 receptor negative regulator (879 aa).

Positions 1–21 are cleaved as a signal peptide; the sequence is MGRPAPRPLLLALLSLAVCRG. 2 Ig-like C2-type domains span residues 22–137 and 149–263; these read RVVR…DTVQ and PSSR…QEIQ. Over 22 to 832 the chain is Extracellular; the sequence is RVVRVPAGTL…MDVLNAFKYP (811 aa). 2 disulfide bridges follow: C43–C119 and C169–C247. N-linked (GlcNAc...) asparagine glycosylation occurs at N44. The short motif at 89–91 is the Cell attachment site element; the sequence is RGD. Phosphothreonine is present on T271. Ig-like C2-type domains lie at 276-389, 406-536, 544-662, and 688-813; these read PTAL…WHKV, PEYQ…DVFS, ASED…AWSP, and PTFN…AEIH. An intrachain disulfide couples C299 to C373. 3 N-linked (GlcNAc...) asparagine glycosylation sites follow: N300, N383, and N413. Positions 424–427 match the Endoplasmic reticulum retention signal motif; the sequence is PTEL. Cysteines 429 and 515 form a disulfide. N-linked (GlcNAc...) asparagine glycans are attached at residues N525, N600, N618, and N691. C571 and C655 are disulfide-bonded. A Cell attachment site motif is present at residues 703-705; sequence RGD. Residues C711 and C793 are joined by a disulfide bond. The helical transmembrane segment at 833 to 853 threads the bilayer; the sequence is LLIGVGLSTVIGLLSCLIGYC. Residues 854-879 lie on the Cytoplasmic side of the membrane; sequence SSHWCCKKEVRETRRERRRLMSMEMD.

In terms of assembly, interacts with CD9 and CD81. Part of a complex composed of CD9, CD81 and IGSF8. Also seems to interact with CD63, CD82 and CD151. As to expression, expressed in myoblasts (at protein level).

It localises to the endoplasmic reticulum membrane. The protein resides in the golgi apparatus. Its subcellular location is the trans-Golgi network membrane. Functionally, inhibits the binding of prostaglandin F2-alpha (PGF2-alpha) to its specific FP receptor, by decreasing the receptor number rather than the affinity constant. Functional coupling with the prostaglandin F2-alpha receptor seems to occur. In myoblasts, associates with tetraspanins CD9 and CD81 to prevent myotube fusion during muscle regeneration. This chain is Prostaglandin F2 receptor negative regulator (Ptgfrn), found in Mus musculus (Mouse).